Reading from the N-terminus, the 220-residue chain is Small ribosomal subunit protein uS2 (220 aa).

The protein belongs to the universal ribosomal protein uS2 family.

The protein is Small ribosomal subunit protein uS2 of Methanococcus maripaludis (strain DSM 14266 / JCM 13030 / NBRC 101832 / S2 / LL).